Here is a 1106-residue protein sequence, read N- to C-terminus: Probable NAD-specific glutamate dehydrogenase (1106 aa).

The active site involves K654.

It belongs to the Glu/Leu/Phe/Val dehydrogenases family. Homotetramer.

It is found in the cytoplasm. It catalyses the reaction L-glutamate + NAD(+) + H2O = 2-oxoglutarate + NH4(+) + NADH + H(+). Functionally, NAD(+)-dependent glutamate dehydrogenase which degrades glutamate to ammonia and alpha-ketoglutarate. The sequence is that of Probable NAD-specific glutamate dehydrogenase (gdh2) from Schizosaccharomyces pombe (strain 972 / ATCC 24843) (Fission yeast).